A 262-amino-acid chain; its full sequence is MSSLVSLEQLCVEFDDRRVLDNISMELEKGKITTLIGPNGAGKSTLVKVILGLQKPTSGKLVKAKKLKIGYVPQKLKLNDSLPLNVIRFLNLAGKYSKQECLDALRLVGAEHLIKSNMHRLSGGENQRVLLARALLQRPDLLVLDEPAQGVDVQGQIDLYDLIESIRHRFDCAVFMVSHDLHLVMAKTDDVICLHHHVCCSGSPATITQHPSYIALFGNAARESLAFYHHDHEHHHHDLSGSPVSGDATSCSNHNHGHHHHD.

In terms of domain architecture, ABC transporter spans 5-220 (VSLEQLCVEF…PSYIALFGNA (216 aa)). ATP is bound at residue 37 to 44 (GPNGAGKS). A disordered region spans residues 236-262 (HHDLSGSPVSGDATSCSNHNHGHHHHD).

This sequence belongs to the ABC transporter superfamily. Zinc importer (TC 3.A.1.15.5) family. As to quaternary structure, the complex is composed of two ATP-binding proteins (ZnuC), two transmembrane proteins (ZnuB) and a solute-binding protein (ZnuA).

Its subcellular location is the cell inner membrane. It catalyses the reaction Zn(2+)(out) + ATP(in) + H2O(in) = Zn(2+)(in) + ADP(in) + phosphate(in) + H(+)(in). Part of the ABC transporter complex ZnuABC involved in zinc import. Responsible for energy coupling to the transport system. This chain is Zinc import ATP-binding protein ZnuC, found in Vibrio parahaemolyticus serotype O3:K6 (strain RIMD 2210633).